A 539-amino-acid chain; its full sequence is Glucose-6-phosphate isomerase (539 aa).

The Proton donor role is filled by E340. Catalysis depends on residues H371 and K500.

The protein belongs to the GPI family.

The protein localises to the cytoplasm. The catalysed reaction is alpha-D-glucose 6-phosphate = beta-D-fructose 6-phosphate. It functions in the pathway carbohydrate biosynthesis; gluconeogenesis. It participates in carbohydrate degradation; glycolysis; D-glyceraldehyde 3-phosphate and glycerone phosphate from D-glucose: step 2/4. Functionally, catalyzes the reversible isomerization of glucose-6-phosphate to fructose-6-phosphate. This Ruegeria pomeroyi (strain ATCC 700808 / DSM 15171 / DSS-3) (Silicibacter pomeroyi) protein is Glucose-6-phosphate isomerase.